A 610-amino-acid polypeptide reads, in one-letter code: Propanediol dehydratase-reactivating factor large subunit (610 aa).

Position 11 to 13 (11 to 13) interacts with ATP; it reads NSS. Residues threonine 105, aspartate 166, and aspartate 183 each contribute to the Mg(2+) site. ATP is bound by residues 459-462, 557-558, and arginine 591; these read EEIK and GS.

The protein belongs to the DdrA/PduG family. Forms a heterotetramer PduG(2)/PduH(2). It depends on Mg(2+) as a cofactor.

It localises to the bacterial microcompartment. It carries out the reaction ATP + H2O = ADP + phosphate + H(+). It functions in the pathway polyol metabolism; 1,2-propanediol degradation. In terms of biological role, large subunit of the propanediol dehydratase-reactivating factor (DDR), which reactivates suicidally inhibited adenosylcobalamin-dependent propanediol dehydratase (diol dehydratase, DDH) found in the bacterial microcompartment (BMC) dedicated to 1,2-propanediol (1,2-PD) degradation. Reactivates inactivated DDH in the presence of ATP, Mg(2+) and free adenosylcobalamin (AdoCbl), by mediating the exchange of the tightly bound damaged cofactor AdoCbl for a free intact one. This subunit contains the adenosine nucleotide binding site. Functionally, expression of a cosmid containing the full 21-gene pdu operon in E.coli allows E.coli to grow on 1,2-propanediol (1,2-PD) with the appearance of bacterial microcompartments (BMC) in its cytoplasm. The 1,2-PD-specific bacterial microcompartment (BMC) concentrates low levels of 1,2-PD catabolic enzymes, concentrates volatile reaction intermediates thus enhancing pathway flux and keeps the level of toxic, mutagenic propionaldehyde low. The protein is Propanediol dehydratase-reactivating factor large subunit of Citrobacter freundii.